Consider the following 256-residue polypeptide: Na(+)-translocating NADH-quinone reductase subunit E (256 aa).

Helical transmembrane passes span 1 to 21 (MWLGAYTWLNVFGILLQAAFI), 50 to 70 (MSVALVLTVTGSINWFVHAFI), 83 to 103 (LASVNLGFLELIIFIVVIAAF), 123 to 143 (GIFLPLIAVNCAILGGVLFGI), 149 to 169 (FIPMMIFSLGAGCGWWLAIVI), and 189 to 209 (MGISFITTGLIAMAFMSLTGI). Residues 229–249 (ENTTNPLKESSSKHQPSISKA) show a composition bias toward polar residues. Residues 229 to 256 (ENTTNPLKESSSKHQPSISKARTQRRSL) form a disordered region.

Belongs to the NqrDE/RnfAE family. Composed of six subunits; NqrA, NqrB, NqrC, NqrD, NqrE and NqrF.

Its subcellular location is the cell inner membrane. It catalyses the reaction a ubiquinone + n Na(+)(in) + NADH + H(+) = a ubiquinol + n Na(+)(out) + NAD(+). NQR complex catalyzes the reduction of ubiquinone-1 to ubiquinol by two successive reactions, coupled with the transport of Na(+) ions from the cytoplasm to the periplasm. NqrA to NqrE are probably involved in the second step, the conversion of ubisemiquinone to ubiquinol. The sequence is that of Na(+)-translocating NADH-quinone reductase subunit E from Chlamydia pneumoniae (Chlamydophila pneumoniae).